The following is a 213-amino-acid chain: Small ribosomal subunit protein uS3 (213 aa).

Residues 38–106 (IRKYVKEKIF…EFALEVSEIR (69 aa)) enclose the KH type-2 domain.

It belongs to the universal ribosomal protein uS3 family. Part of the 30S ribosomal subunit. Forms a tight complex with proteins S10 and S14.

Binds the lower part of the 30S subunit head. Binds mRNA in the 70S ribosome, positioning it for translation. This chain is Small ribosomal subunit protein uS3, found in Maridesulfovibrio salexigens (strain ATCC 14822 / DSM 2638 / NCIMB 8403 / VKM B-1763) (Desulfovibrio salexigens).